We begin with the raw amino-acid sequence, 414 residues long: Arrestin domain-containing protein 3 (414 aa).

Short sequence motifs (PPxY motif) lie at residues Pro346–Tyr349 and Pro391–Tyr394. Positions Leu393–Arg414 are disordered. Over residues Ser405 to Arg414 the composition is skewed to basic and acidic residues.

Belongs to the arrestin family. As to quaternary structure, interacts (via PPxY motifs) with NEDD4 (via WW domains). Interacts with ADRB2. Interacts with ADRB3. Interacts with HGS (via PPxY motifs). Does not bind TXN (thioredoxin). Interacts with ITCH. Detected in visceral fat, subcutaneous fat, brown fat and skeletal muscle, and at lower levels in kidney.

It is found in the cytoplasm. The protein resides in the cell membrane. The protein localises to the lysosome. It localises to the endosome. Its subcellular location is the early endosome. Its function is as follows. Adapter protein that plays a role in regulating cell-surface expression of adrenergic receptors and probably also other G protein-coupled receptors. Plays a role in NEDD4-mediated ubiquitination and endocytosis af activated ADRB2 and subsequent ADRB2 degradation. May recruit NEDD4 to ADRB2. Alternatively, may function as adapter protein that does not play a major role in recruiting NEDD4 to ADRB2, but rather plays a role in a targeting ADRB2 to endosomes. The protein is Arrestin domain-containing protein 3 (Arrdc3) of Mus musculus (Mouse).